The sequence spans 344 residues: Selenide, water dikinase (344 aa).

The active site involves Sec-16. Sec-16 is a non-standard amino acid (selenocysteine). ATP-binding positions include Lys-19 and 46–48 (TND). A Mg(2+)-binding site is contributed by Asp-49. ATP-binding positions include Asp-66, Asp-89, and 135–137 (GHT). Asp-89 provides a ligand contact to Mg(2+). Mg(2+) is bound at residue Asp-223.

The protein belongs to the selenophosphate synthase 1 family. Class I subfamily. Homodimer. It depends on Mg(2+) as a cofactor.

It catalyses the reaction hydrogenselenide + ATP + H2O = selenophosphate + AMP + phosphate + 2 H(+). Synthesizes selenophosphate from selenide and ATP. This chain is Selenide, water dikinase, found in Caldanaerobacter subterraneus subsp. tengcongensis (strain DSM 15242 / JCM 11007 / NBRC 100824 / MB4) (Thermoanaerobacter tengcongensis).